A 322-amino-acid chain; its full sequence is Cytochrome c biogenesis protein CcsA (322 aa).

Transmembrane regions (helical) follow at residues 15–35 (FSIV…VDGI), 45–65 (GMIV…TYSG), 72–92 (LYES…VPYF), 98–120 (YLST…GLLT), 144–164 (MILG…LLVI), 226–246 (GISL…VWAN), 253–273 (WNWD…AIYL), and 287–307 (AIVA…VNLL).

Belongs to the CcmF/CycK/Ccl1/NrfE/CcsA family. In terms of assembly, may interact with Ccs1.

The protein localises to the plastid. It localises to the chloroplast thylakoid membrane. Required during biogenesis of c-type cytochromes (cytochrome c6 and cytochrome f) at the step of heme attachment. The polypeptide is Cytochrome c biogenesis protein CcsA (Coffea arabica (Arabian coffee)).